Consider the following 267-residue polypeptide: Type III pantothenate kinase (267 aa).

6–13 contacts ATP; that stretch reads DVRNTHTT. 109–112 contributes to the substrate binding site; that stretch reads GADR. Catalysis depends on Asp111, which acts as the Proton acceptor. K(+) is bound at residue Asp131. Ser134 lines the ATP pocket. Residue Thr186 participates in substrate binding.

The protein belongs to the type III pantothenate kinase family. As to quaternary structure, homodimer. It depends on NH4(+) as a cofactor. Requires K(+) as cofactor.

Its subcellular location is the cytoplasm. It carries out the reaction (R)-pantothenate + ATP = (R)-4'-phosphopantothenate + ADP + H(+). Its pathway is cofactor biosynthesis; coenzyme A biosynthesis; CoA from (R)-pantothenate: step 1/5. In terms of biological role, catalyzes the phosphorylation of pantothenate (Pan), the first step in CoA biosynthesis. The sequence is that of Type III pantothenate kinase from Mycobacterium sp. (strain JLS).